The following is a 440-amino-acid chain: Ferredoxin--NADP reductase (440 aa).

In terms of domain architecture, CpcD-like spans Ser17–Val75. A disordered region spans residues Ala98 to Ala142. The segment covering Pro122–Lys133 has biased composition (basic and acidic residues). Residues Asn155–Leu279 form the FAD-binding FR-type domain. FAD-binding positions include Arg214 to Ser217, Cys235 to Arg237, Tyr241, Val253 to Ser255, and Thr294. NADP(+) contacts are provided by Ser217 and Arg237. NADP(+) contacts are provided by residues Thr294, Val330–Pro331, Ser360–Arg361, Arg370–Gln374, Gly399–Leu400, and Glu438.

It belongs to the ferredoxin--NADP reductase type 1 family. FAD is required as a cofactor.

Its subcellular location is the cellular thylakoid membrane. The catalysed reaction is 2 reduced [2Fe-2S]-[ferredoxin] + NADP(+) + H(+) = 2 oxidized [2Fe-2S]-[ferredoxin] + NADPH. This chain is Ferredoxin--NADP reductase (petH), found in Nostoc sp. (strain PCC 7120 / SAG 25.82 / UTEX 2576).